An 859-amino-acid polypeptide reads, in one-letter code: Low-density lipoprotein receptor-related protein 12 (859 aa).

A signal peptide spans 1–32; sequence MARRWSTKESPRWRSALLLLFLAGVYGNGALA. Residues 33 to 492 are Extracellular-facing; sequence EHSENVHISG…ENCPVIVPTR (460 aa). 2 disulfides stabilise this stretch: cysteine 47–cysteine 76 and cysteine 103–cysteine 122. A CUB 1 domain is found at 47–159; the sequence is CGETPEQIRA…KGFRLAYFSG (113 aa). N-linked (GlcNAc...) asparagine glycosylation occurs at asparagine 75. Asparagine 146 is a glycosylation site (N-linked (GlcNAc...) asparagine). LDL-receptor class A domains are found at residues 165-201 and 214-255; these read NCAC…EICA and PCAY…IDCD. 7 disulfide bridges follow: cysteine 166–cysteine 178, cysteine 173–cysteine 191, cysteine 185–cysteine 200, cysteine 215–cysteine 232, cysteine 222–cysteine 245, cysteine 239–cysteine 254, and cysteine 259–cysteine 285. The CUB 2 domain occupies 259-372; sequence CGQWLKYFYG…RGFNATYQVD (114 aa). N-linked (GlcNAc...) asparagine glycans are attached at residues asparagine 284 and asparagine 366. 3 consecutive LDL-receptor class A domains span residues 374–411, 412–449, and 450–486; these read FCLP…INCT, MCQK…KNCF, and FCQP…ENCP. 9 cysteine pairs are disulfide-bonded: cysteine 375–cysteine 388, cysteine 382–cysteine 401, cysteine 395–cysteine 410, cysteine 413–cysteine 426, cysteine 420–cysteine 439, cysteine 433–cysteine 448, cysteine 451–cysteine 463, cysteine 458–cysteine 476, and cysteine 470–cysteine 485. N-linked (GlcNAc...) asparagine glycosylation occurs at asparagine 409. A glycan (N-linked (GlcNAc...) asparagine) is linked at asparagine 441. A helical transmembrane segment spans residues 493–513; that stretch reads VITAAVIGSLICGLLLVIALG. The Cytoplasmic segment spans residues 514 to 859; the sequence is CTCKLYSLRM…TSDDEALLLC (346 aa). 4 disordered regions span residues 623-678, 693-723, 748-770, and 802-823; these read ADGD…LPQK, ASSS…SPAR, SSVS…REDD, and QGQG…SNRD. 2 stretches are compositionally biased toward polar residues: residues 748–757 and 802–814; these read SSVSQNQSPL and QGQG…NATN.

The protein belongs to the LDLR family. May interact with RACK1, ZFYVE9 and NMRK2.

The protein localises to the membrane. It is found in the coated pit. Its function is as follows. Probable receptor, which may be involved in the internalization of lipophilic molecules and/or signal transduction. May act as a tumor suppressor. In Pongo abelii (Sumatran orangutan), this protein is Low-density lipoprotein receptor-related protein 12 (LRP12).